The primary structure comprises 564 residues: Pyruvate decarboxylase (564 aa).

Pyruvate contacts are provided by Asp28 and His115. Thiamine diphosphate is bound by residues Thr390 and 413 to 415; that span reads GSI. Position 444 (Asp444) interacts with Mg(2+). Residues 445–446 and 471–476 contribute to the thiamine diphosphate site; these read GS and NDGYTI. Mg(2+) is bound by residues Asn471 and Gly473. Pyruvate is bound at residue Glu477.

Belongs to the TPP enzyme family. As to quaternary structure, homotetramer. Mg(2+) serves as cofactor. Thiamine diphosphate is required as a cofactor.

It carries out the reaction a 2-oxocarboxylate + H(+) = an aldehyde + CO2. The catalysed reaction is pyruvate + H(+) = acetaldehyde + CO2. The sequence is that of Pyruvate decarboxylase (PDC1) from Kluyveromyces marxianus (Yeast).